A 250-amino-acid chain; its full sequence is UPF0524 protein C3orf70 (250 aa).

The segment at 201-250 (ESCDEDTEEGAELSSEEDYSPESSWEPDECTLLSPSQSDLEVIETIETTV) is disordered. Acidic residues predominate over residues 202-229 (SCDEDTEEGAELSSEEDYSPESSWEPDE).

This sequence belongs to the UPF0524 family.

Its function is as follows. May play a role in neuronal and neurobehavioral development. The chain is UPF0524 protein C3orf70 (C3orf70) from Homo sapiens (Human).